The sequence spans 179 residues: uncharacterized protein (179 aa).

Residues 1 to 10 show a composition bias toward polar residues; it reads ATLSAGQPAS. Disordered regions lie at residues 1 to 35, 59 to 80, and 131 to 179; these read ATLSAGQPASLTEAEPNTEKATLHRHPAPKRRGKC, VRRNSRRSEPLSGSQPRPPIVT, and ECPT…STCR. A compositionally biased stretch (basic residues) spans 23-33; it reads LHRHPAPKRRG. A compositionally biased stretch (basic residues) spans 149-158; sequence TPSRVRRSRR.

This is an uncharacterized protein from Human cytomegalovirus (strain AD169) (HHV-5).